The sequence spans 223 residues: MOB-like protein phocein (223 aa).

Residues 1 to 23 (MTAATENRTVRRNGPGTKRADWN) are disordered. The Zn(2+) site is built by Cys92, Cys97, His169, and His174.

It belongs to the MOB1/phocein family.

The protein localises to the cytoplasm. It is found in the perinuclear region. Its subcellular location is the membrane. The protein resides in the golgi apparatus. It localises to the golgi stack membrane. Its function is as follows. May play a role in membrane trafficking, specifically in membrane budding reactions. This chain is MOB-like protein phocein, found in Caenorhabditis elegans.